Here is an 82-residue protein sequence, read N- to C-terminus: Large ribosomal subunit protein bL27 (82 aa).

The disordered stretch occupies residues 1-20 (MAHKKGASSSRNGRDSNPQY). A compositionally biased stretch (polar residues) spans 7–19 (ASSSRNGRDSNPQ).

The protein belongs to the bacterial ribosomal protein bL27 family.

The sequence is that of Large ribosomal subunit protein bL27 from Bifidobacterium longum (strain NCC 2705).